Here is a 648-residue protein sequence, read N- to C-terminus: Cell surface glycoprotein MUC18 (648 aa).

The signal sequence occupies residues 1–23 (MGLPRLVCAFLFAACCCCRSATG). Ig-like V-type domains lie at 24-131 (VPGE…HYVQ) and 141-244 (PTIQ…KEVT). The Extracellular portion of the chain corresponds to 24-560 (VPGEEKQPTP…EKKLPQQESK (537 aa)). Disulfide bonds link C50-C118, C163-C225, C274-C322, C367-C409, and C454-C501. N-linked (GlcNAc...) asparagine glycosylation occurs at N58. Ig-like C2-type domains are found at residues 246 to 332 (PVLY…TTVM), 337 to 426 (PLEL…RRVS), and 432 to 512 (SPWM…SNTT). Positions 282-304 (PHFTINKKNPSTEEMEEESTDEN) are disordered. N510 carries N-linked (GlcNAc...) asparagine glycosylation. The segment covering 527–549 (DSSQTTGLSTPTVSPHSRANSTS) has biased composition (polar residues). The interval 527 to 554 (DSSQTTGLSTPTVSPHSRANSTSTEKKL) is disordered. Residues 561–581 (GVVIVAVIVCTLVLAVLGATL) form a helical membrane-spanning segment. Residues 582–648 (YYFYKKGKLP…QGEKYIDLRH (67 aa)) lie on the Cytoplasmic side of the membrane. S608 and S616 each carry phosphoserine. The interval 626–648 (LQGSNGDKRAPGDQGEKYIDLRH) is disordered. Positions 631 to 648 (GDKRAPGDQGEKYIDLRH) are enriched in basic and acidic residues.

Detected in lung, uterus and placenta (at protein level). Detected in heart, lung, kidney, adrenal gland, intestine, testis, skeletal muscle and aorta. Detected at low levels in adult brain, in particular in brain stem and spinal cord, but also in hippocampus, olfactory bulb and striatum (at protein level).

The protein resides in the cell membrane. It localises to the perikaryon. Its function is as follows. Plays a role in cell adhesion, and in cohesion of the endothelial monolayer at intercellular junctions in vascular tissue. Its expression may allow melanoma cells to interact with cellular elements of the vascular system, thereby enhancing hematogeneous tumor spread. Could be an adhesion molecule active in neural crest cells during embryonic development. Acts as a surface receptor that triggers tyrosine phosphorylation of FYN and PTK2/FAK1, and a transient increase in the intracellular calcium concentration. This Rattus norvegicus (Rat) protein is Cell surface glycoprotein MUC18 (Mcam).